A 201-amino-acid chain; its full sequence is FMN-dependent NADH:quinone oxidoreductase (201 aa).

FMN is bound by residues Ser10, 16 to 18 (SQS), 96 to 99 (MYNF), and 140 to 143 (SRGG).

Belongs to the azoreductase type 1 family. As to quaternary structure, homodimer. The cofactor is FMN.

The enzyme catalyses 2 a quinone + NADH + H(+) = 2 a 1,4-benzosemiquinone + NAD(+). It catalyses the reaction N,N-dimethyl-1,4-phenylenediamine + anthranilate + 2 NAD(+) = 2-(4-dimethylaminophenyl)diazenylbenzoate + 2 NADH + 2 H(+). Quinone reductase that provides resistance to thiol-specific stress caused by electrophilic quinones. In terms of biological role, also exhibits azoreductase activity. Catalyzes the reductive cleavage of the azo bond in aromatic azo compounds to the corresponding amines. The polypeptide is FMN-dependent NADH:quinone oxidoreductase (Yersinia enterocolitica serotype O:8 / biotype 1B (strain NCTC 13174 / 8081)).